A 165-amino-acid polypeptide reads, in one-letter code: Transcription elongation factor A protein-like 1 (165 aa).

Positions 1–101 (MENTRSENEE…EQPPCGVGKH (101 aa)) are disordered. Acidic residues predominate over residues 33 to 60 (CSEEDQSSEDLSSEEQSSEEEFFPEELL).

This sequence belongs to the TFS-II family. TFA subfamily.

It localises to the nucleus. Its function is as follows. May be involved in transcriptional regulation. Modulates various viral and cellular promoters in a promoter context-dependent manner. Does not bind DNA directly. This is Transcription elongation factor A protein-like 1 from Mus musculus (Mouse).